The following is a 437-amino-acid chain: UDP-N-acetylmuramate--L-alanine ligase (437 aa).

G114–S120 lines the ATP pocket.

It belongs to the MurCDEF family.

Its subcellular location is the cytoplasm. The catalysed reaction is UDP-N-acetyl-alpha-D-muramate + L-alanine + ATP = UDP-N-acetyl-alpha-D-muramoyl-L-alanine + ADP + phosphate + H(+). The protein operates within cell wall biogenesis; peptidoglycan biosynthesis. In terms of biological role, cell wall formation. In Lactobacillus gasseri (strain ATCC 33323 / DSM 20243 / BCRC 14619 / CIP 102991 / JCM 1131 / KCTC 3163 / NCIMB 11718 / NCTC 13722 / AM63), this protein is UDP-N-acetylmuramate--L-alanine ligase.